Consider the following 145-residue polypeptide: D-aminoacyl-tRNA deacylase (145 aa).

The Gly-cisPro motif, important for rejection of L-amino acids signature appears at 137–138 (GP).

Belongs to the DTD family. Homodimer.

The protein resides in the cytoplasm. The catalysed reaction is glycyl-tRNA(Ala) + H2O = tRNA(Ala) + glycine + H(+). It carries out the reaction a D-aminoacyl-tRNA + H2O = a tRNA + a D-alpha-amino acid + H(+). Its function is as follows. An aminoacyl-tRNA editing enzyme that deacylates mischarged D-aminoacyl-tRNAs. Also deacylates mischarged glycyl-tRNA(Ala), protecting cells against glycine mischarging by AlaRS. Acts via tRNA-based rather than protein-based catalysis; rejects L-amino acids rather than detecting D-amino acids in the active site. By recycling D-aminoacyl-tRNA to D-amino acids and free tRNA molecules, this enzyme counteracts the toxicity associated with the formation of D-aminoacyl-tRNA entities in vivo and helps enforce protein L-homochirality. The sequence is that of D-aminoacyl-tRNA deacylase from Sodalis glossinidius (strain morsitans).